The sequence spans 459 residues: tRNA modification GTPase MnmE (459 aa).

(6S)-5-formyl-5,6,7,8-tetrahydrofolate contacts are provided by arginine 22, glutamate 87, and arginine 126. Residues 221-381 (GINVAICGKP…LEESIEKAVL (161 aa)) form the TrmE-type G domain. Asparagine 231 is a K(+) binding site. Residues 231–236 (NVGKSS), 250–256 (TSIPGTT), and 275–278 (DTAG) each bind GTP. Serine 235 lines the Mg(2+) pocket. Residues threonine 250, isoleucine 252, and threonine 255 each contribute to the K(+) site. Threonine 256 is a Mg(2+) binding site. (6S)-5-formyl-5,6,7,8-tetrahydrofolate is bound at residue lysine 459.

The protein belongs to the TRAFAC class TrmE-Era-EngA-EngB-Septin-like GTPase superfamily. TrmE GTPase family. As to quaternary structure, homodimer. Heterotetramer of two MnmE and two MnmG subunits. The cofactor is K(+).

The protein resides in the cytoplasm. In terms of biological role, exhibits a very high intrinsic GTPase hydrolysis rate. Involved in the addition of a carboxymethylaminomethyl (cmnm) group at the wobble position (U34) of certain tRNAs, forming tRNA-cmnm(5)s(2)U34. The chain is tRNA modification GTPase MnmE from Syntrophomonas wolfei subsp. wolfei (strain DSM 2245B / Goettingen).